Here is a 244-residue protein sequence, read N- to C-terminus: Osmotin-like protein OSM34 (244 aa).

Positions 1 to 22 are cleaved as a signal peptide; the sequence is MANLLVSTFIFSALLLISTATA. Disulfide bonds link Cys31/Cys222, Cys72/Cys82, Cys87/Cys93, Cys138/Cys212, Cys143/Cys195, Cys151/Cys161, Cys165/Cys174, and Cys175/Cys182.

It belongs to the thaumatin family.

The polypeptide is Osmotin-like protein OSM34 (OSM34) (Arabidopsis thaliana (Mouse-ear cress)).